The primary structure comprises 337 residues: Terpene synthase 4 (337 aa).

Aspartate 94 and aspartate 98 together coordinate Mg(2+). A D(D/E)XX(D/E) motif motif is present at residues 94–98 (DDIFD). Substrate is bound at residue arginine 195. Mg(2+)-binding residues include asparagine 241, serine 245, and glutamate 249. An NSE motif motif is present at residues 241–249 (NDIYSYHRE). Positions 320–327 (WSESCTRY) match the WxxxxxRY motif motif.

Belongs to the terpene synthase family. It depends on Mg(2+) as a cofactor.

The enzyme catalyses (2E,6E)-farnesyl diphosphate = alpha-muurolene + diphosphate. It carries out the reaction (2E,6E)-farnesyl diphosphate = (-)-(E)-beta-caryophyllene + diphosphate. In terms of biological role, terpene synthase that catalyzes the cyclization of farnesyl diphosphate (FPP) into alpha-muurolene, (-)-beta-caryophyllene, and one unidentified sesquiterpene. TPS4 shows only trace monoterpene synthase activity with geranyl diphosphate (GPP) as substrate and produces very small amounts of myrcene. P.polycephalum has a unique biology and these volatile terpenoids could function in internal communication of P.polycephalum, to mark the territory that have been explored, or they may be involved in chemotaxis. The sequence is that of Terpene synthase 4 from Physarum polycephalum (Slime mold).